The primary structure comprises 50 residues: Protein hunchback (50 aa).

3 C2H2-type zinc fingers span residues 1-5 (HIRNH), 11-33 (FKCNKCSYSCVNKSMLNSHLKSH), and 39-50 (YRCADCAYATKY).

This sequence belongs to the hunchback C2H2-type zinc-finger protein family.

The protein resides in the nucleus. In terms of biological role, gap class segmentation protein that controls development of head structures. The polypeptide is Protein hunchback (hb) (Schultesia lampyridiformis (Firefly mimic roach)).